Reading from the N-terminus, the 347-residue chain is MKPAGPRKRAVDPLAHLVLTRYMEAHFEALLVTGYSADTVRARRISIRRFIVWCEERGIAQPADVTRAVLERYQRHLFYYRKPNGAPLTLGSQHGALAPLKTWFKWLARENHILYNPASELDLPKLPKHLPRAILSVQEVEAILAEADPATPYGLRDRAMLELLYSTGIRRMEVAGLALYDVDATRRLAFVRDGKGAKDRVVPVGVRALAWLDRYLLEARPQLIVAEREALFVTDYGEPVSPEYVASRVKRYMEFAGIQKPGATHLLRHAMATHMLEAGADVRVLQALLGHAQLNTTEIYTHVSIEHLRAIHDATHPARLQREDVLAADATDAARQALADALDRDEG.

In terms of domain architecture, Core-binding (CB) spans 17-108 (LVLTRYMEAH…PLKTWFKWLA (92 aa)). The 189-residue stretch at 125-313 (KLPKHLPRAI…SIEHLRAIHD (189 aa)) folds into the Tyr recombinase domain. Catalysis depends on residues Arg170, Lys195, His265, Arg268, and His291. Catalysis depends on Tyr300, which acts as the O-(3'-phospho-DNA)-tyrosine intermediate.

Belongs to the 'phage' integrase family.

It is found in the cytoplasm. Site-specific tyrosine recombinase, which acts by catalyzing the cutting and rejoining of the recombining DNA molecules. This chain is Tyrosine recombinase XerC 2, found in Ralstonia nicotianae (strain ATCC BAA-1114 / GMI1000) (Ralstonia solanacearum).